Reading from the N-terminus, the 144-residue chain is Maximins 7/H13 (144 aa).

An N-terminal signal peptide occupies residues 1–18; that stretch reads MNFKYIVAVSFLIASAYA. Positions 19-43 are excised as a propeptide; the sequence is RSEENDEQSLSQRDVLEEESLREIR. An Asparagine amide modification is found at Asn-70. The propeptide occupies 74-123; sequence TAEDHEVMKRLEAVMRDLDSLDYPEEAAERETRGFNQEEIANLFTKKEKR. Leu-143 is modified (leucine amide).

The protein belongs to the bombinin family. In terms of tissue distribution, expressed by the skin glands.

The protein localises to the secreted. Its function is as follows. Maximin-7 shows antimicrobial activity against bacteria and against the fungus C.albicans. It has little hemolytic activity. Maximin-H13 shows antimicrobial activity against bacteria and against the fungus C.albicans. Shows strong hemolytic activity. This chain is Maximins 7/H13, found in Bombina maxima (Giant fire-bellied toad).